Consider the following 477-residue polypeptide: Ribulose bisphosphate carboxylase large chain (477 aa).

Positions 1-2 (MS) are excised as a propeptide. An N-acetylproline modification is found at proline 3. An N6,N6,N6-trimethyllysine modification is found at lysine 14. Residues asparagine 123 and threonine 173 each contribute to the substrate site. Residue lysine 175 is the Proton acceptor of the active site. Lysine 177 provides a ligand contact to substrate. Lysine 201, aspartate 203, and glutamate 204 together coordinate Mg(2+). Residue lysine 201 is modified to N6-carboxylysine. Histidine 294 functions as the Proton acceptor in the catalytic mechanism. Substrate-binding residues include arginine 295, histidine 327, and serine 379.

This sequence belongs to the RuBisCO large chain family. Type I subfamily. Heterohexadecamer of 8 large chains and 8 small chains; disulfide-linked. The disulfide link is formed within the large subunit homodimers. Requires Mg(2+) as cofactor. The disulfide bond which can form in the large chain dimeric partners within the hexadecamer appears to be associated with oxidative stress and protein turnover.

It localises to the plastid. It is found in the chloroplast. The enzyme catalyses 2 (2R)-3-phosphoglycerate + 2 H(+) = D-ribulose 1,5-bisphosphate + CO2 + H2O. The catalysed reaction is D-ribulose 1,5-bisphosphate + O2 = 2-phosphoglycolate + (2R)-3-phosphoglycerate + 2 H(+). In terms of biological role, ruBisCO catalyzes two reactions: the carboxylation of D-ribulose 1,5-bisphosphate, the primary event in carbon dioxide fixation, as well as the oxidative fragmentation of the pentose substrate in the photorespiration process. Both reactions occur simultaneously and in competition at the same active site. The sequence is that of Ribulose bisphosphate carboxylase large chain from Nicotiana otophora (Tobacco).